The primary structure comprises 355 residues: UDP-3-O-acylglucosamine N-acyltransferase (355 aa).

Histidine 246 functions as the Proton acceptor in the catalytic mechanism.

Belongs to the transferase hexapeptide repeat family. LpxD subfamily. In terms of assembly, homotrimer.

The enzyme catalyses a UDP-3-O-[(3R)-3-hydroxyacyl]-alpha-D-glucosamine + a (3R)-hydroxyacyl-[ACP] = a UDP-2-N,3-O-bis[(3R)-3-hydroxyacyl]-alpha-D-glucosamine + holo-[ACP] + H(+). Its pathway is bacterial outer membrane biogenesis; LPS lipid A biosynthesis. In terms of biological role, catalyzes the N-acylation of UDP-3-O-acylglucosamine using 3-hydroxyacyl-ACP as the acyl donor. Is involved in the biosynthesis of lipid A, a phosphorylated glycolipid that anchors the lipopolysaccharide to the outer membrane of the cell. This chain is UDP-3-O-acylglucosamine N-acyltransferase, found in Polaromonas naphthalenivorans (strain CJ2).